Consider the following 258-residue polypeptide: Kallikrein-1 (258 aa).

Positions 1-18 are cleaved as a signal peptide; sequence MWFLVLCLALSLGGTGAA. The propeptide at 19-24 is activation peptide; the sequence is PPIQSR. A Peptidase S1 domain is found at 25–255; that stretch reads IVGGWECSQP…YVKWIEDTIA (231 aa). Cystine bridges form between Cys-31–Cys-170, Cys-47–Cys-63, Cys-149–Cys-216, Cys-181–Cys-195, and Cys-206–Cys-231. The Charge relay system role is filled by His-62. O-linked (GalNAc...) serine glycosylation is present at Ser-90. Asn-99 carries an N-linked (GlcNAc...) asparagine glycan. O-linked (GalNAc...) serine glycosylation occurs at Ser-101. A glycan (N-linked (GlcNAc...) asparagine) is linked at Asn-105. The active-site Charge relay system is the Asp-117. Asn-161 carries N-linked (GlcNAc...) asparagine glycosylation. Ser-163 carries O-linked (GalNAc...) serine glycosylation. Ser-210 functions as the Charge relay system in the catalytic mechanism.

It belongs to the peptidase S1 family. Kallikrein subfamily.

It carries out the reaction Preferential cleavage of Arg-|-Xaa bonds in small molecule substrates. Highly selective action to release kallidin (lysyl-bradykinin) from kininogen involves hydrolysis of Met-|-Xaa or Leu-|-Xaa.. Functionally, glandular kallikreins cleave Met-Lys and Arg-Ser bonds in kininogen to release Lys-bradykinin. This is Kallikrein-1 (KLK1) from Papio hamadryas (Hamadryas baboon).